Consider the following 29-residue polypeptide: Beta-theraphotoxin-Gr1a (29 aa).

Intrachain disulfides connect C2–C16, C9–C21, and C15–C25.

It belongs to the neurotoxin 30 (phrixotoxin) family. In terms of tissue distribution, expressed by the venom gland.

It is found in the secreted. Its function is as follows. Inhibits voltage-gated sodium channels Nav1.1/SCN1A (IC(50)=630 nM), Nav1.2/SCN2A (IC(50)=230 nM), Nav1.3/SCN3A (IC(50)=770 nM), Nav1.4/SCN4A (IC(50)=1290 nM), Nav1.6/SCN8A (IC(50)=630 nM), Nav1.7/SCN9A (IC(50)=15.3-1000 nM) and potassium channels Kv11.1/KCNH2 (IC(50)=4.2 uM). This is Beta-theraphotoxin-Gr1a from Grammostola rosea (Chilean rose tarantula).